The following is a 102-amino-acid chain: uncharacterized protein (102 aa).

2 consecutive transmembrane segments (helical) span residues 38–58 (FYVW…QLIL) and 64–84 (VLFL…LFQF).

The protein resides in the membrane. This is an uncharacterized protein from Saccharomyces cerevisiae (strain ATCC 204508 / S288c) (Baker's yeast).